The primary structure comprises 317 residues: tRNA dimethylallyltransferase (317 aa).

14-21 (GPTAVGKT) is an ATP binding site. Substrate is bound at residue 16 to 21 (TAVGKT). Positions 39–42 (DSMQ) are interaction with substrate tRNA.

The protein belongs to the IPP transferase family. In terms of assembly, monomer. Requires Mg(2+) as cofactor.

It carries out the reaction adenosine(37) in tRNA + dimethylallyl diphosphate = N(6)-dimethylallyladenosine(37) in tRNA + diphosphate. In terms of biological role, catalyzes the transfer of a dimethylallyl group onto the adenine at position 37 in tRNAs that read codons beginning with uridine, leading to the formation of N6-(dimethylallyl)adenosine (i(6)A). The polypeptide is tRNA dimethylallyltransferase (Bacillus mycoides (strain KBAB4) (Bacillus weihenstephanensis)).